Reading from the N-terminus, the 116-residue chain is Ribonuclease P protein component (116 aa).

It belongs to the RnpA family. Consists of a catalytic RNA component (M1 or rnpB) and a protein subunit.

It catalyses the reaction Endonucleolytic cleavage of RNA, removing 5'-extranucleotides from tRNA precursor.. In terms of biological role, RNaseP catalyzes the removal of the 5'-leader sequence from pre-tRNA to produce the mature 5'-terminus. It can also cleave other RNA substrates such as 4.5S RNA. The protein component plays an auxiliary but essential role in vivo by binding to the 5'-leader sequence and broadening the substrate specificity of the ribozyme. This is Ribonuclease P protein component from Thermoanaerobacter pseudethanolicus (strain ATCC 33223 / 39E) (Clostridium thermohydrosulfuricum).